Here is a 420-residue protein sequence, read N- to C-terminus: UDP-N-acetylglucosamine 1-carboxyvinyltransferase (420 aa).

Phosphoenolpyruvate is bound at residue 22–23 (KN). R92 serves as a coordination point for UDP-N-acetyl-alpha-D-glucosamine. C116 acts as the Proton donor in catalysis. A 2-(S-cysteinyl)pyruvic acid O-phosphothioketal modification is found at C116. Residues 121–125 (RPVDL), 161–164 (KVSV), D306, and I328 contribute to the UDP-N-acetyl-alpha-D-glucosamine site.

This sequence belongs to the EPSP synthase family. MurA subfamily.

The protein resides in the cytoplasm. It carries out the reaction phosphoenolpyruvate + UDP-N-acetyl-alpha-D-glucosamine = UDP-N-acetyl-3-O-(1-carboxyvinyl)-alpha-D-glucosamine + phosphate. The protein operates within cell wall biogenesis; peptidoglycan biosynthesis. In terms of biological role, cell wall formation. Adds enolpyruvyl to UDP-N-acetylglucosamine. This Yersinia pseudotuberculosis serotype O:1b (strain IP 31758) protein is UDP-N-acetylglucosamine 1-carboxyvinyltransferase.